Consider the following 338-residue polypeptide: UDP-3-O-acylglucosamine N-acyltransferase (338 aa).

Catalysis depends on H239, which acts as the Proton acceptor.

This sequence belongs to the transferase hexapeptide repeat family. LpxD subfamily. Homotrimer.

It catalyses the reaction a UDP-3-O-[(3R)-3-hydroxyacyl]-alpha-D-glucosamine + a (3R)-hydroxyacyl-[ACP] = a UDP-2-N,3-O-bis[(3R)-3-hydroxyacyl]-alpha-D-glucosamine + holo-[ACP] + H(+). Its pathway is bacterial outer membrane biogenesis; LPS lipid A biosynthesis. Catalyzes the N-acylation of UDP-3-O-acylglucosamine using 3-hydroxyacyl-ACP as the acyl donor. Is involved in the biosynthesis of lipid A, a phosphorylated glycolipid that anchors the lipopolysaccharide to the outer membrane of the cell. In Xylella fastidiosa (strain M12), this protein is UDP-3-O-acylglucosamine N-acyltransferase.